The following is a 174-amino-acid chain: Centrosomal protein 20 (174 aa).

The necessary and sufficient for homooligomerization and localization to centrosomes and pericentriolar satellites stretch occupies residues M1 to I104. Residues E49–V81 enclose the LisH domain. Residues G129 to R174 are disordered. Position 144 is a phosphoserine (S144). The span at K147–H167 shows a compositional bias: basic and acidic residues.

This sequence belongs to the CEP43 family. Homooligomer; probably required for localization to centrosomes. Forms a complex with KIAA0753/OFIP and OFD1; within this complex may stabilize the interaction between OFD1 and KIAA0753/OFIP. Interacts with PCM1; this interaction may be mediated by KIAA0753/OFIP. Interacts with PLK1 in later G1, S, G2 and M phases of the cell cycle; this interaction recruits PLK1 to centrosomes. In terms of tissue distribution, widely expressed. Detected in brain, heart, kidney, liver, lung, skeletal muscle, placenta and intestine.

Its subcellular location is the cytoplasm. The protein localises to the cytoskeleton. The protein resides in the microtubule organizing center. It localises to the centrosome. It is found in the centriole. Its subcellular location is the cell projection. The protein localises to the cilium. The protein resides in the cilium basal body. It localises to the cytoplasmic granule. It is found in the centriolar satellite. In terms of biological role, involved in the biogenesis of cilia. Required for the recruitment of PLK1 to centrosomes and S phase progression. This chain is Centrosomal protein 20, found in Homo sapiens (Human).